The chain runs to 224 residues: GrpE protein homolog 2, mitochondrial (224 aa).

A mitochondrion-targeting transit peptide spans 1-31 (MAARLLWAVRRRMQPLAAHAASEGRGWLHPF). Lys141 carries the N6-acetyllysine modification.

It belongs to the GrpE family. In terms of assembly, probable component of the PAM complex at least composed of a mitochondrial HSP70 protein, GRPEL1 or GRPEL2, TIMM44, TIMM16/PAM16 and TIMM14/DNAJC19.

Its subcellular location is the mitochondrion matrix. Its function is as follows. Essential component of the PAM complex, a complex required for the translocation of transit peptide-containing proteins from the inner membrane into the mitochondrial matrix in an ATP-dependent manner. Seems to control the nucleotide-dependent binding of mitochondrial HSP70 to substrate proteins. Stimulates ATPase activity of mt-HSP70. May also serve to modulate the interconversion of oligomeric (inactive) and monomeric (active) forms of mt-HSP70. This Bos taurus (Bovine) protein is GrpE protein homolog 2, mitochondrial (GRPEL2).